We begin with the raw amino-acid sequence, 1482 residues long: MRKDRLLHLCLVLLLILLSASDSNSTEPQYMVLVPSLLHTEAPKKGCVLLSHLNETVTVSASLESGRENRSLFTDLVAEKDLFHCVSFTLPRISASSEVAFLSIQIKGPTQDFRKRNTVLVLNTQSLVFVQTDKPMYKPGQTVRFRVVSVDENFRPRNELIPLIYLENPRRNRIAQWQSLKLEAGINQLSFPLSSEPIQGSYRVVVQTESGGRIQHPFTVEEFVLPKFEVKVQVPKIISIMDEKVNITVCGEYTYGKPVPGLATVSLCRKLSRVLNCDKQEVCEEFSQQLNSNGCITQQVHTKMLQITNTGFEMKLRVEARIREEGTDLEVTANRISEITNIVSKLKFVKVDSHFRQGIPFFAQVLLVDGKGVPIPNKLFFISVNDANYYSNATTNEQGLAQFSINTTSISVNKLFVRVFTVHPNLCFHYSWVAEDHQGAQHTANRVFSLSGSYIHLEPVAGTLPCGHTETITAHYTLNRQAMGELSELSFHYLIMAKGVIVRSGTHTLPVESGDMKGSFALSFPVESDVAPIARMFIFAILPDGEVVGDSEKFEIENCLANKVDLSFSPAQSPPASHAHLQVAAAPQSLCALRAVDQSVLLMKPEAELSVSSVYNLLTVKDLTNFPDNVDQQEEEQGHCPRPFFIHNGAIYVPLSSNEADIYSFLKGMGLKVFTNSKIRKPKSCSVIPSVSAGAVGQGYYGAGLGVVERPYVPQLGTYNVIPLNNEQSSGPVPETVRSYFPETWIWELVAVNSSGVAEVGVTVPDTITEWKAGAFCLSEDAGLGISSTASLRAFQPFFVELTMPYSVIRGEVFTLKATVLNYLPKCIRVSVQLKASPAFLASQNTKGEESYCICGNERQTLSWTVTPKTLGNVNFSVSAEAMQSLELCGNEVVEVPEIKRKDTVIKTLLVEAEGIEQEKTFSSMTCASGANVSEQLSLKLPSNVVKESARASFSVLGDILGSAMQNIQNLLQMPYGCGEQNMVLFAPNIYVLNYLNETQQLTQEIKAKAVGYLITGYQRQLNYKHQDGSYSTFGERYGRNQGNTWLTAFVLKTFAQARSYIFIDEAHITQSLTWLSQMQKDNGCFRSSGSLLNNAIKGGVEDEATLSAYVTIALLEIPLPVTNPIVRNALFCLESAWNVAKEGTHGSHVYTKALLAYAFSLLGKQNQNREILNSLDKEAVKEDNLVHWERPQRPKAPVGHLYQTQAPSAEVEMTSYVLLAYLTAQPAPTSGDLTSATNIVKWIMKQQNAQGGFSSTQDTVVALHALSRYGAATFTRTEKTAQVTVQDSQTFSTNFQVDNNNLLLLQQISLPELPGEYVITVTGERCVYLQTSMKYNILPEKEDSPFALKVQTVPQTCDGHKAHTSFQISLTISYTGNRPASNMVIVDVKMVSGFIPLKPTVKMLERSSSVSRTEVSNNHVLIYVEQVTNQTLSFSFMVLQDIPVGDLKPAIVKVYDYYETDESVVAEYIAPCSTDTEHGNV.

Positions 1 to 25 (MRKDRLLHLCLVLLLILLSASDSNS) are cleaved as a signal peptide. N-linked (GlcNAc...) asparagine glycosylation is found at Asn-54, Asn-69, Asn-246, Asn-392, and Asn-406. Residues 685–735 (CSVIPSVSAGAVGQGYYGAGLGVVERPYVPQLGTYNVIPLNNEQSSGPVPE) form a bait region region. N-linked (GlcNAc...) asparagine glycosylation is found at Asn-753, Asn-875, and Asn-932. The isoglutamyl cysteine thioester (Cys-Gln) cross-link spans 978–981 (CGEQ). N-linked (GlcNAc...) asparagine glycosylation is found at Asn-997 and Asn-1430.

It belongs to the protease inhibitor I39 (alpha-2-macroglobulin) family. In terms of assembly, homotetramer, which consists of two pairs of disulfide-linked chains. In terms of tissue distribution, plasma. Prominent constituent of late-pregnancy sera.

Its subcellular location is the secreted. Is able to inhibit all four classes of proteinases by a unique 'trapping' mechanism. This protein has a peptide stretch, called the 'bait region' which contains specific cleavage sites for different proteinases. When a proteinase cleaves the bait region, a conformational change is induced in the protein which traps the proteinase. The entrapped enzyme remains active against low molecular weight substrates (activity against high molecular weight substrates is greatly reduced). Following cleavage in the bait region a thioester bond is hydrolyzed and mediates the covalent binding of the protein to the proteinase. This is Pregnancy zone protein (PZP) from Homo sapiens (Human).